Consider the following 358-residue polypeptide: DnaJ homolog subfamily B member 11 (358 aa).

An N-terminal signal peptide occupies residues 1–22 (MAPQNLSTFCLLLLYLIGAVIA). The region spanning 25 to 90 (DFYKILGVPR…EKRKQYDTYG (66 aa)) is the J domain. Residue T188 is modified to Phosphothreonine. N-linked (GlcNAc...) asparagine glycosylation is present at N261.

Part of a large chaperone multiprotein complex comprising DNAJB11, HSP90B1, HSPA5, HYOU, PDIA2, PDIA4, PDIA6, PPIB, SDF2L1, UGGT1 and very small amounts of ERP29, but not, or at very low levels, CALR nor CANX. Binds to denatured substrates in an ATP-independent manner. Interacts via the J domain with HSPA5 in an ATP-dependent manner. Contains high-mannose Endo H-sensitive carbohydrates. Post-translationally, cys-169, Cys-171, Cys-193 and Cys-196 form intramolecular disulfide bonds. The preferential partner for each Cys is not known. In terms of processing, thr-188 was reported to be phosphorylated upon DNA damage by ATM or ATR; however as this position has been shown to be in the ER lumen, the in vivo relevance is not proven. In terms of tissue distribution, widely expressed.

The protein localises to the endoplasmic reticulum lumen. Its function is as follows. As a co-chaperone for HSPA5 it is required for proper folding, trafficking or degradation of proteins. Binds directly to both unfolded proteins that are substrates for ERAD and nascent unfolded peptide chains, but dissociates from the HSPA5-unfolded protein complex before folding is completed. May help recruiting HSPA5 and other chaperones to the substrate. Stimulates HSPA5 ATPase activity. It is necessary for maturation and correct trafficking of PKD1. The polypeptide is DnaJ homolog subfamily B member 11 (DNAJB11) (Homo sapiens (Human)).